The chain runs to 1483 residues: Ubiquitin fusion degradation protein 4 (1483 aa).

The disordered stretch occupies residues 1-117 (MSENNSHNLD…NNEFGSNPLH (117 aa)). A compositionally biased stretch (basic and acidic residues) spans 8 to 18 (NLDEHESHSEN). Residues 61–70 (EADDGEDDDN) show a composition bias toward acidic residues. Thr-87 is subject to Phosphothreonine. Residue Lys-349 forms a Glycyl lysine isopeptide (Lys-Gly) (interchain with G-Cter in ubiquitin) linkage. Residues 1007-1081 (CGVKSDSFIN…LIQLWKNKSK (75 aa)) form a K-box region. The HECT domain maps to 1376-1483 (AEHGYTMDSS…EEGAGAFLLS (108 aa)). The Glycyl thioester intermediate role is filled by Cys-1450.

Belongs to the UPL family. K-HECT subfamily.

It catalyses the reaction S-ubiquitinyl-[E2 ubiquitin-conjugating enzyme]-L-cysteine + [acceptor protein]-L-lysine = [E2 ubiquitin-conjugating enzyme]-L-cysteine + N(6)-ubiquitinyl-[acceptor protein]-L-lysine.. Functionally, E3 ubiquitin-protein ligase which accepts ubiquitin from an E2 ubiquitin-conjugating enzyme in the form of a thioester and then directly transfers the ubiquitin to targeted substrates. The chain is Ubiquitin fusion degradation protein 4 (UFD4) from Saccharomyces cerevisiae (strain ATCC 204508 / S288c) (Baker's yeast).